A 113-amino-acid chain; its full sequence is Large ribosomal subunit protein uL22 (113 aa).

It belongs to the universal ribosomal protein uL22 family. Part of the 50S ribosomal subunit.

In terms of biological role, this protein binds specifically to 23S rRNA; its binding is stimulated by other ribosomal proteins, e.g. L4, L17, and L20. It is important during the early stages of 50S assembly. It makes multiple contacts with different domains of the 23S rRNA in the assembled 50S subunit and ribosome. Functionally, the globular domain of the protein is located near the polypeptide exit tunnel on the outside of the subunit, while an extended beta-hairpin is found that lines the wall of the exit tunnel in the center of the 70S ribosome. The sequence is that of Large ribosomal subunit protein uL22 from Neorickettsia sennetsu (strain ATCC VR-367 / Miyayama) (Ehrlichia sennetsu).